The primary structure comprises 798 residues: Probable serine/threonine-protein kinase DDB_G0276461 (798 aa).

Residues 54–324 (VTEVKLVAEG…DLLNYLNEIR (271 aa)) enclose the Protein kinase domain. ATP-binding positions include 60–68 (VAEGGFGFV) and lysine 82. Aspartate 185 functions as the Proton acceptor in the catalytic mechanism. Disordered stretches follow at residues 330–538 (GLQT…NGNF), 553–645 (TNGS…SYNN), and 659–798 (SSAS…FGIL). 6 stretches are compositionally biased toward low complexity: residues 335–406 (SSNN…NTPN), 429–490 (SNSN…NNNN), 506–538 (PSPS…NGNF), 557–603 (TNFE…INNS), 611–642 (SSGS…NSGS), and 659–678 (SSAS…NSWN). A compositionally biased stretch (polar residues) spans 679-697 (VTLTPSQSNKNSTGNLKPL). Over residues 698-716 (NNNNNNNNNNNNRFANNTN) the composition is skewed to low complexity. Polar residues predominate over residues 717–769 (SSRDYSFDFSSPNTSNNNDFGSFVQPSSSSSLNTTHFSKPNYNVNLNQTTSMT). Positions 770–790 (NNYNNNNYNNNNNSNNNNNNS) are enriched in low complexity.

It belongs to the protein kinase superfamily. Ser/Thr protein kinase family.

The catalysed reaction is L-seryl-[protein] + ATP = O-phospho-L-seryl-[protein] + ADP + H(+). It catalyses the reaction L-threonyl-[protein] + ATP = O-phospho-L-threonyl-[protein] + ADP + H(+). This is Probable serine/threonine-protein kinase DDB_G0276461 from Dictyostelium discoideum (Social amoeba).